Here is a 151-residue protein sequence, read N- to C-terminus: Ribosome maturation factor RimP (151 aa).

This sequence belongs to the RimP family.

It localises to the cytoplasm. In terms of biological role, required for maturation of 30S ribosomal subunits. The sequence is that of Ribosome maturation factor RimP from Vibrio atlanticus (strain LGP32) (Vibrio splendidus (strain Mel32)).